The sequence spans 173 residues: Aliphatic sulfonate oxidoreductase, polyferredoxin-like subunit (173 aa).

4Fe-4S ferredoxin-type domains follow at residues 9–40 (IWIL…WPEA), 48–80 (LFPG…VDEK), and 82–111 (GAVV…IPAG). C18, C21, C24, C28, C58, C61, C66, C70, C91, C94, C97, C101, C118, C121, C127, and C131 together coordinate [4Fe-4S] cluster.

In terms of assembly, heterodimer composed of a small WOR5-S subunit, with four [4Fe-4S] clusters, and a large WOR5-L subunit, containing the active site tungsto-bispyranopterin cofactor as well as another [4Fe-4S] cluster. It depends on [4Fe-4S] cluster as a cofactor.

The protein localises to the cytoplasm. Polyferredoxin-like subunit of an oxidoreductase that can desulfonate and oxidize aliphatic sulfonates such as taurine. May serve as a an electron-transfer subunit between the catalytic subunit and ferredoxin. In Pyrococcus furiosus (strain ATCC 43587 / DSM 3638 / JCM 8422 / Vc1), this protein is Aliphatic sulfonate oxidoreductase, polyferredoxin-like subunit.